Consider the following 955-residue polypeptide: Calsyntenin-2 (955 aa).

An N-terminal signal peptide occupies residues Met1–Gly20. Topologically, residues Ser21–Ser831 are extracellular. 2 Cadherin domains span residues Ile44–Phe160 and Lys161–Phe280. Asn56 and Asn98 each carry an N-linked (GlcNAc...) asparagine glycan. Residues Asn342, Asn374, Asn716, and Asn729 are each glycosylated (N-linked (GlcNAc...) asparagine). The chain crosses the membrane as a helical span at residues Ile832–Val852. Residues Tyr853–Tyr955 lie on the Cytoplasmic side of the membrane. Positions Pro887–Tyr955 are disordered. The segment covering Met888–Glu898 has biased composition (basic and acidic residues). Composition is skewed to acidic residues over residues Asp899–Met913 and Asp920–Glu929.

The protein belongs to the calsyntenin family. In terms of processing, proteolytically processed under normal cellular conditions. A primary zeta-cleavage generates a large extracellular (soluble) N-terminal domain (sAlc) and a short C-terminal transmembrane fragment (CTF1). A secondary cleavage catalyzed by gamma-secretase within the transmembrane domain releases the beta-Alc-gamma chain in the extracellular milieu and produces an intracellular fragment (AlcICD). This processing is strongly suppressed in the tripartite complex formed with APBA2 and APP, which seems to prevent the association with PSEN1. In terms of tissue distribution, restricted to the brain.

The protein localises to the postsynaptic cell membrane. It is found in the endoplasmic reticulum membrane. It localises to the golgi apparatus membrane. Its subcellular location is the cell projection. The protein resides in the dendrite. Functionally, postsynaptic adhesion molecule that binds to presynaptic neurexins to mediate synapse formation, and which is involved in learning and memory. Promotes synapse development by acting as a cell adhesion molecule at the postsynaptic membrane, which associates with neurexin-alpha at the presynaptic membrane. This is Calsyntenin-2 from Homo sapiens (Human).